The following is a 517-amino-acid chain: Ribose import ATP-binding protein RbsA 1 (517 aa).

2 ABC transporter domains span residues 11–251 and 263–507; these read LEMR…VGRD and YDPG…ALAT. 43 to 50 lines the ATP pocket; the sequence is GENGAGKS.

The protein belongs to the ABC transporter superfamily. Ribose importer (TC 3.A.1.2.1) family. In terms of assembly, the complex is composed of an ATP-binding protein (RbsA), two transmembrane proteins (RbsC) and a solute-binding protein (RbsB).

It localises to the cell inner membrane. It catalyses the reaction D-ribose(out) + ATP + H2O = D-ribose(in) + ADP + phosphate + H(+). Part of the ABC transporter complex RbsABC involved in ribose import. Responsible for energy coupling to the transport system. This chain is Ribose import ATP-binding protein RbsA 1, found in Burkholderia cenocepacia (strain HI2424).